The sequence spans 348 residues: Dihydroorotate dehydrogenase (quinone) (348 aa).

FMN is bound by residues 65 to 69 and Thr-89; that span reads AGMDK. Lys-69 contributes to the substrate binding site. Substrate is bound at residue 114 to 118; the sequence is NRMGF. Asn-143 and Asn-176 together coordinate FMN. Position 176 (Asn-176) interacts with substrate. The active-site Nucleophile is the Ser-179. Asn-181 lines the substrate pocket. Residues Lys-221 and Thr-249 each contribute to the FMN site. Substrate is bound at residue 250-251; sequence NT. FMN is bound by residues Gly-272, Gly-301, and 322-323; that span reads YT.

Belongs to the dihydroorotate dehydrogenase family. Type 2 subfamily. In terms of assembly, monomer. Requires FMN as cofactor.

It localises to the cell membrane. The catalysed reaction is (S)-dihydroorotate + a quinone = orotate + a quinol. Its pathway is pyrimidine metabolism; UMP biosynthesis via de novo pathway; orotate from (S)-dihydroorotate (quinone route): step 1/1. In terms of biological role, catalyzes the conversion of dihydroorotate to orotate with quinone as electron acceptor. The polypeptide is Dihydroorotate dehydrogenase (quinone) (Akkermansia muciniphila (strain ATCC BAA-835 / DSM 22959 / JCM 33894 / BCRC 81048 / CCUG 64013 / CIP 107961 / Muc)).